A 227-amino-acid chain; its full sequence is MTHPLQLGFQDATSPIMEELLHFHDHTLMIVFLISSLVLYIITLMLTTKLTHTSTMDAQEVETVWTILPAIILILIALPSLRILYMMDEINNPLLTVKTMGHQWYWSYEYTDYEDLNFDSYMVPTTDLKPGELRLLEVDNRVVLPMEVPIRMLISSEDVLHSWAVPSLGLKTDAIPGRLNQTTLTSTRPGLYYGQCSEICGSNHSFMPIVLELVPLKYFEDWSVSMT.

Topologically, residues 1–14 (MTHPLQLGFQDATS) are mitochondrial intermembrane. The chain crosses the membrane as a helical span at residues 15–45 (PIMEELLHFHDHTLMIVFLISSLVLYIITLM). The Mitochondrial matrix portion of the chain corresponds to 46-59 (LTTKLTHTSTMDAQ). A helical membrane pass occupies residues 60 to 87 (EVETVWTILPAIILILIALPSLRILYMM). At 88–227 (DEINNPLLTV…YFEDWSVSMT (140 aa)) the chain is on the mitochondrial intermembrane side. Cu cation-binding residues include histidine 161, cysteine 196, glutamate 198, cysteine 200, histidine 204, and methionine 207. Mg(2+) is bound at residue glutamate 198. Tyrosine 218 is modified (phosphotyrosine).

This sequence belongs to the cytochrome c oxidase subunit 2 family. As to quaternary structure, component of the cytochrome c oxidase (complex IV, CIV), a multisubunit enzyme composed of 14 subunits. The complex is composed of a catalytic core of 3 subunits MT-CO1, MT-CO2 and MT-CO3, encoded in the mitochondrial DNA, and 11 supernumerary subunits COX4I, COX5A, COX5B, COX6A, COX6B, COX6C, COX7A, COX7B, COX7C, COX8 and NDUFA4, which are encoded in the nuclear genome. The complex exists as a monomer or a dimer and forms supercomplexes (SCs) in the inner mitochondrial membrane with NADH-ubiquinone oxidoreductase (complex I, CI) and ubiquinol-cytochrome c oxidoreductase (cytochrome b-c1 complex, complex III, CIII), resulting in different assemblies (supercomplex SCI(1)III(2)IV(1) and megacomplex MCI(2)III(2)IV(2)). Found in a complex with TMEM177, COA6, COX18, COX20, SCO1 and SCO2. Interacts with TMEM177 in a COX20-dependent manner. Interacts with COX20. Interacts with COX16. Cu cation is required as a cofactor.

The protein resides in the mitochondrion inner membrane. It carries out the reaction 4 Fe(II)-[cytochrome c] + O2 + 8 H(+)(in) = 4 Fe(III)-[cytochrome c] + 2 H2O + 4 H(+)(out). In terms of biological role, component of the cytochrome c oxidase, the last enzyme in the mitochondrial electron transport chain which drives oxidative phosphorylation. The respiratory chain contains 3 multisubunit complexes succinate dehydrogenase (complex II, CII), ubiquinol-cytochrome c oxidoreductase (cytochrome b-c1 complex, complex III, CIII) and cytochrome c oxidase (complex IV, CIV), that cooperate to transfer electrons derived from NADH and succinate to molecular oxygen, creating an electrochemical gradient over the inner membrane that drives transmembrane transport and the ATP synthase. Cytochrome c oxidase is the component of the respiratory chain that catalyzes the reduction of oxygen to water. Electrons originating from reduced cytochrome c in the intermembrane space (IMS) are transferred via the dinuclear copper A center (CU(A)) of subunit 2 and heme A of subunit 1 to the active site in subunit 1, a binuclear center (BNC) formed by heme A3 and copper B (CU(B)). The BNC reduces molecular oxygen to 2 water molecules using 4 electrons from cytochrome c in the IMS and 4 protons from the mitochondrial matrix. The polypeptide is Cytochrome c oxidase subunit 2 (MT-CO2) (Carlito syrichta (Philippine tarsier)).